The following is a 3396-amino-acid chain: Versican core protein (3396 aa).

A signal peptide spans 1-20 (MFINIKSILWMCSTLIVTHA). An Ig-like V-type domain is found at 21–146 (LHKVKVGKSP…EDTQDTVSLT (126 aa)). 5 disulfide bridges follow: cysteine 44/cysteine 130, cysteine 172/cysteine 243, cysteine 196/cysteine 217, cysteine 270/cysteine 345, and cysteine 294/cysteine 315. The N-linked (GlcNAc...) asparagine glycan is linked to asparagine 57. Link domains follow at residues 150 to 245 (VVFH…YCYV) and 251 to 347 (DVFH…YCFK). The N-linked (GlcNAc...) asparagine glycan is linked to asparagine 330. The segment at 348-1335 (PKEATTIDLS…IIEVRENKTG (988 aa)) is GAG-alpha (glucosaminoglycan attachment domain). Polar residues predominate over residues 420–430 (ATKLPTPTGST). Disordered regions lie at residues 420–439 (ATKL…MDDY) and 603–622 (STTV…MDDW). A glycan (N-linked (GlcNAc...) asparagine) is linked at asparagine 615. A glycan (O-linked (Xyl...) (chondroitin sulfate) serine) is linked at serine 659. Asparagine 782 and asparagine 809 each carry an N-linked (GlcNAc...) asparagine glycan. Disordered regions lie at residues 807-829 (EDNT…LPPA), 1126-1154 (IGPK…TSSL), and 1277-1316 (REYF…PAST). Residues 811 to 824 (TSKPLESTEPSASS) show a composition bias toward polar residues. A compositionally biased stretch (low complexity) spans 1143-1154 (EGSSTTGFTSSL). 2 N-linked (GlcNAc...) asparagine glycosylation sites follow: asparagine 1332 and asparagine 1398. Residues 1336-3089 (RMSDLSVIGH…VEGTAIYLPG (1754 aa)) are GAG-beta. 2 disordered regions span residues 1420 to 1497 (VPKD…SGGE) and 1510 to 1539 (FESG…HTEP). The segment covering 1422–1433 (KDPEAAEARRGQ) has biased composition (basic and acidic residues). Asparagine 1442 and asparagine 1468 each carry an N-linked (GlcNAc...) asparagine glycan. Residues 1469 to 1480 (ESTETTESLEVT) are compositionally biased toward low complexity. Over residues 1517 to 1538 (KGAESVTERDTEVGHQAHEHTE) the composition is skewed to basic and acidic residues. O-linked (Xyl...) (chondroitin sulfate) serine glycosylation is found at serine 1548 and serine 1631. The N-linked (GlcNAc...) asparagine glycan is linked to asparagine 1663. Disordered regions lie at residues 1717 to 1737 (STTV…TAST) and 1759 to 1789 (PNVA…MTDS). Over residues 1720 to 1729 (VEEKKRKEEE) the composition is skewed to basic and acidic residues. Positions 1760–1781 (NVATSSDSGTRKSFMSLTTPTQ) are enriched in polar residues. Asparagine 1898 is a glycosylation site (N-linked (GlcNAc...) asparagine). 2 O-linked (Xyl...) (chondroitin sulfate) serine glycosylation sites follow: serine 1935 and serine 1959. 3 disordered regions span residues 1962-1994 (AAFR…STMV), 2107-2134 (RQEI…NSPA), and 2168-2188 (KEMK…PDAN). The span at 1969–1978 (TSPSTVPTSV) shows a compositional bias: low complexity. Residues 2111–2120 (ESETTSEEQI) show a composition bias toward acidic residues. Position 2116 is a phosphoserine; by FAM20C (serine 2116). Residue asparagine 2179 is glycosylated (N-linked (GlcNAc...) asparagine). Serine 2247 and serine 2254 each carry an O-linked (Xyl...) (chondroitin sulfate) serine glycan. Asparagine 2272, asparagine 2280, asparagine 2360, asparagine 2385, and asparagine 2392 each carry an N-linked (GlcNAc...) asparagine glycan. 4 disordered regions span residues 2371-2396 (TSRP…ETTT), 2445-2473 (SATT…EVPS), 2493-2518 (SEQN…STDG), and 2598-2617 (DTEV…DDST). 2 stretches are compositionally biased toward polar residues: residues 2445–2461 (SATT…TFVS) and 2496–2513 (NKSS…VSYE). A glycan (N-linked (GlcNAc...) asparagine) is linked at asparagine 2496. Serine 2608 is modified (phosphoserine). At threonine 2617 the chain carries Phosphothreonine. N-linked (GlcNAc...) asparagine glycosylation is present at asparagine 2628. O-linked (Xyl...) (chondroitin sulfate) serine glycans are attached at residues serine 2722, serine 2723, and serine 2767. Disordered regions lie at residues 2834 to 2856 (GSEA…DVGS) and 2881 to 2905 (EEYL…EDDG). The segment covering 2896–2905 (TKLEPSEDDG) has biased composition (basic and acidic residues). Asparagine 2934 carries N-linked (GlcNAc...) asparagine glycosylation. Serine 2941 carries O-linked (Xyl...) (chondroitin sulfate) serine glycosylation. The N-linked (GlcNAc...) asparagine glycan is linked to asparagine 3067. In terms of domain architecture, EGF-like 1 spans 3089-3125 (GPDRCKMNPCLNGGTCYPTETSYVCTCVPGYSGDQCE). Disulfide bonds link cysteine 3093–cysteine 3104, cysteine 3098–cysteine 3113, cysteine 3115–cysteine 3124, cysteine 3131–cysteine 3142, cysteine 3136–cysteine 3151, cysteine 3153–cysteine 3162, cysteine 3169–cysteine 3180, cysteine 3197–cysteine 3289, cysteine 3265–cysteine 3281, cysteine 3296–cysteine 3339, and cysteine 3325–cysteine 3352. The EGF-like 2; calcium-binding domain occupies 3127-3163 (DFDECHSNPCRNGATCVDGFNTFRCLCLPSYVGALCE). The C-type lectin domain maps to 3176-3290 (FQGQCYKYFA…CNYHLTYTCK (115 aa)). A Sushi domain is found at 3294-3354 (VACGQPPVVE…WAIPKITCMN (61 aa)). Asparagine 3369 and asparagine 3379 each carry an N-linked (GlcNAc...) asparagine glycan. Positions 3371–3380 (SSAKDNSINT) are enriched in polar residues. The tract at residues 3371–3396 (SSAKDNSINTSKHDHRWSRRWQESRR) is disordered.

It belongs to the aggrecan/versican proteoglycan family. Interacts with FBLN1. Post-translationally, phosphorylated by FAM20C in the extracellular medium. Proteolytically cleaved by ADAMTS5 and ADAMTS15 in the pericellular matrix surrounding myoblasts, facilitating myoblast contact and fusion which is required for skeletal muscle development and regeneration. As to expression, detected in placenta (at protein level). Detected in cerebrospinal fluid, fibroblasts and urine (at protein level). Expressed in the retina (at protein level). Cerebral white matter and plasma. Isoform V0: Expressed in normal brain, gliomas, medulloblastomas, schwannomas, neurofibromas, and meningiomas. Isoform V1: Expressed in normal brain, gliomas, medulloblastomas, schwannomas, neurofibromas, and meningiomas. Isoform V2: Restricted to normal brain and gliomas. Isoform V3: Found in all these tissues except medulloblastomas.

Its subcellular location is the secreted. It is found in the extracellular space. It localises to the extracellular matrix. The protein resides in the cell projection. The protein localises to the cilium. Its subcellular location is the photoreceptor outer segment. It is found in the interphotoreceptor matrix. May play a role in intercellular signaling and in connecting cells with the extracellular matrix. May take part in the regulation of cell motility, growth and differentiation. Binds hyaluronic acid. The chain is Versican core protein (VCAN) from Homo sapiens (Human).